A 359-amino-acid chain; its full sequence is MRQILIAVAVAVTVSILLTPVLIRLFTKQGFGHQIREDGPPSHHTKRGTPSMGGVAILAGIWAGYLGAHLAGLAFDGEGIGASGLLVLGLATALGGVGFIDDLIKIRRSRNLGLNKTAKTVGQITSAVLFGVLVLQFRNAAGLTPGSADLSYVREIATVTLAPVLFVLFCVVIVSAWSNAVNFTDGLDGLAAGTMAMVTAAYVLITFWQYRNACVTAPGLGCYNVRDPLDLALIAAATAGACIGFLWWNAAPAKIFMGDTGSLALGGVIAGLSVTSRTEILAVVLGALFVAEITSVVLQILTFRTTGRRMFRMAPFHHHFELVGWAETTVIIRFWLLTAITCGLGVALFYGEWLAAVGA.

10 helical membrane-spanning segments follow: residues 3 to 23, 55 to 75, 80 to 100, 117 to 137, 156 to 176, 187 to 207, 231 to 251, 255 to 275, 280 to 300, and 334 to 354; these read QILI…PVLI, VAIL…GLAF, IGAS…VGFI, TAKT…VLQF, IATV…IVSA, LDGL…LITF, LALI…WNAA, IFMG…LSVT, ILAV…VLQI, and FWLL…GEWL.

Belongs to the glycosyltransferase 4 family. MraY subfamily. Mg(2+) is required as a cofactor.

The protein resides in the cell membrane. The enzyme catalyses UDP-N-acetyl-alpha-D-muramoyl-L-alanyl-gamma-D-glutamyl-meso-2,6-diaminopimeloyl-D-alanyl-D-alanine + di-trans,octa-cis-undecaprenyl phosphate = di-trans,octa-cis-undecaprenyl diphospho-N-acetyl-alpha-D-muramoyl-L-alanyl-D-glutamyl-meso-2,6-diaminopimeloyl-D-alanyl-D-alanine + UMP. Its pathway is cell wall biogenesis; peptidoglycan biosynthesis. Its function is as follows. Catalyzes the initial step of the lipid cycle reactions in the biosynthesis of the cell wall peptidoglycan: transfers peptidoglycan precursor phospho-MurNAc-pentapeptide from UDP-MurNAc-pentapeptide onto the lipid carrier undecaprenyl phosphate, yielding undecaprenyl-pyrophosphoryl-MurNAc-pentapeptide, known as lipid I. The sequence is that of Phospho-N-acetylmuramoyl-pentapeptide-transferase from Mycobacterium tuberculosis (strain ATCC 25177 / H37Ra).